Here is a 268-residue protein sequence, read N- to C-terminus: Small ribosomal subunit protein eS1 (268 aa).

The segment at 1–21 (MAVGKNKGLSKGGKKGGKKKV) is disordered.

Belongs to the eukaryotic ribosomal protein eS1 family. As to quaternary structure, component of the small ribosomal subunit. Mature ribosomes consist of a small (40S) and a large (60S) subunit. The 40S subunit contains about 33 different proteins and 1 molecule of RNA (18S). The 60S subunit contains about 49 different proteins and 3 molecules of RNA (28S, 5.8S and 5S).

It localises to the cytoplasm. Its function is as follows. Essential for oogenesis; required for late follicle cell development. The protein is Small ribosomal subunit protein eS1 of Drosophila persimilis (Fruit fly).